The primary structure comprises 214 residues: Isochorismatase family protein 2B (214 aa).

It belongs to the isochorismatase family.

In Dictyostelium discoideum (Social amoeba), this protein is Isochorismatase family protein 2B.